The chain runs to 62 residues: Photosystem II reaction center protein Z (62 aa).

2 helical membrane-spanning segments follow: residues 8–28 (AVFA…LVFA) and 41–61 (FSGT…NSLI).

The protein belongs to the PsbZ family. In terms of assembly, PSII is composed of 1 copy each of membrane proteins PsbA, PsbB, PsbC, PsbD, PsbE, PsbF, PsbH, PsbI, PsbJ, PsbK, PsbL, PsbM, PsbT, PsbY, PsbZ, Psb30/Ycf12, at least 3 peripheral proteins of the oxygen-evolving complex and a large number of cofactors. It forms dimeric complexes.

It localises to the plastid. Its subcellular location is the chloroplast thylakoid membrane. Its function is as follows. May control the interaction of photosystem II (PSII) cores with the light-harvesting antenna, regulates electron flow through the 2 photosystem reaction centers. PSII is a light-driven water plastoquinone oxidoreductase, using light energy to abstract electrons from H(2)O, generating a proton gradient subsequently used for ATP formation. The sequence is that of Photosystem II reaction center protein Z from Oryza nivara (Indian wild rice).